A 381-amino-acid chain; its full sequence is GDP-mannose-dependent monoacylated alpha-(1-6)-phosphatidylinositol monomannoside mannosyltransferase (381 aa).

The GDP-alpha-D-mannose site is built by Arg-206, Lys-211, Leu-261, and Glu-298.

Belongs to the glycosyltransferase group 1 family. Glycosyltransferase 4 subfamily.

It catalyses the reaction a 1,2-diacyl-sn-glycero-3-phospho-[alpha-D-mannopyranosyl-(1&lt;-&gt;6)-D-myo-inositol] + GDP-alpha-D-mannose = a 2,6-O-bis(alpha-D-mannopyranosyl)-1-phosphatidyl-1D-myo-inositol + GDP + H(+). The enzyme catalyses a 1,2-diacyl-sn-glycero-3-phospho-[alpha-D-6-acyl-mannopyranosyl-(1&lt;-&gt;6)-D-myo-inositol] + GDP-alpha-D-mannose = a 2-O-(alpha-D-mannosyl)-6-O-(6-O-acyl-alpha-D-mannosyl)-1-phosphatidyl-1D-myo-inositol + GDP + H(+). Its pathway is phospholipid metabolism; phosphatidylinositol metabolism. Functionally, involved in the biosynthesis of phosphatidyl-myo-inositol mannosides (PIM) which are early precursors in the biosynthesis of lipomannans (LM) and lipoarabinomannans (LAM). Catalyzes the addition of a mannosyl residue from GDP-D-mannose (GDP-Man) to the position 6 of a phosphatidyl-myo-inositol bearing an alpha-1,2-linked mannose residue (PIM1) to generate phosphatidyl-myo-inositol bearing alpha-1,2- and alpha-1,6-linked mannose residues (Ac1PIM2). PimB also catalyzes the addition of a mannosyl residue from GDP-Man to the position 6 of phosphatidyl-myo-inositol bearing an acylated alpha-1,2-linked mannose residue (Ac1PIM1) to generate monoacylated phosphatidyl-myo-inositol bearing alpha-1,2- and alpha-1,6-linked mannose residues (Ac1PIM2). The addition of the second mannosyl residue by PimB preferentially occurs before the acylation of the mannosyl residue transferred by PimA. Also able to transfer a mannosyl residue from GDP-Man to the position 6 of a phosphatidyl-myo-inositol (PI), but this reaction is very slow. The polypeptide is GDP-mannose-dependent monoacylated alpha-(1-6)-phosphatidylinositol monomannoside mannosyltransferase (Corynebacterium glutamicum (strain ATCC 13032 / DSM 20300 / JCM 1318 / BCRC 11384 / CCUG 27702 / LMG 3730 / NBRC 12168 / NCIMB 10025 / NRRL B-2784 / 534)).